Reading from the N-terminus, the 437-residue chain is MSKRLSPQLQHNITEDAYCETHLEPTRLFCDVDQITLCSKCFQSQEHKHHMVCGIQEAAENYRKLFQEILNTSREKLEAAKSILTDEQERMAMIQEEEQNFKKMIESEYSMRLRLLNEECEQNLQRQQECISDLNLRETLLNQAIKLATELEEMFQEMLQRLGRVGRENMEKLKESEARASEQVRSLLKLIVELEKKCGEGTLALLKNAKYSLERSKSLLLEHLEPAHITDLSLCHIRGLSSMFRVLQRHLTLDPETAHPCLALSEDLRTMRLRHGQQDGAGNPERLDFSAMVLAAESFTSGRHYWEVDVEKATRWQVGIYHGSADAKGSTARASGEKVLLTGSVMGTEWTLWVFPPLKRLFLEKKLDTVGVFLDCEHGQISFYNVTEMSLIYNFSHCAFQGALRPVFSLCIPNGDTSPDSLTILQHGPSCDATVSP.

A B box-type zinc finger spans residues 14–55 (TEDAYCETHLEPTRLFCDVDQITLCSKCFQSQEHKHHMVCGI). Zn(2+)-binding residues include cysteine 19, histidine 22, cysteine 41, and histidine 47. The stretch at 55 to 200 (IQEAAENYRK…IVELEKKCGE (146 aa)) forms a coiled coil. The 199-residue stretch at 231–429 (DLSLCHIRGL…DSLTILQHGP (199 aa)) folds into the B30.2/SPRY domain.

It carries out the reaction S-ubiquitinyl-[E2 ubiquitin-conjugating enzyme]-L-cysteine + [acceptor protein]-L-lysine = [E2 ubiquitin-conjugating enzyme]-L-cysteine + N(6)-ubiquitinyl-[acceptor protein]-L-lysine.. It participates in protein modification; protein ubiquitination. This is Probable E3 ubiquitin-protein ligase TRIML2 from Homo sapiens (Human).